The chain runs to 209 residues: Uracil phosphoribosyltransferase (209 aa).

Residues arginine 79, arginine 104, and 131–139 (DPMLATGGS) contribute to the 5-phospho-alpha-D-ribose 1-diphosphate site. Residues isoleucine 194 and 199–201 (GDA) contribute to the uracil site. Aspartate 200 is a binding site for 5-phospho-alpha-D-ribose 1-diphosphate.

This sequence belongs to the UPRTase family. The cofactor is Mg(2+).

The enzyme catalyses UMP + diphosphate = 5-phospho-alpha-D-ribose 1-diphosphate + uracil. It functions in the pathway pyrimidine metabolism; UMP biosynthesis via salvage pathway; UMP from uracil: step 1/1. Its activity is regulated as follows. Allosterically activated by GTP. Its function is as follows. Catalyzes the conversion of uracil and 5-phospho-alpha-D-ribose 1-diphosphate (PRPP) to UMP and diphosphate. This chain is Uracil phosphoribosyltransferase, found in Bacillus licheniformis (strain ATCC 14580 / DSM 13 / JCM 2505 / CCUG 7422 / NBRC 12200 / NCIMB 9375 / NCTC 10341 / NRRL NRS-1264 / Gibson 46).